Consider the following 289-residue polypeptide: Polyamine aminopropyltransferase (289 aa).

Residues 5-245 (PGPITLIEPL…YAVNFILGSL (241 aa)) enclose the PABS domain. Residue Q36 participates in S-methyl-5'-thioadenosine binding. 2 residues coordinate spermidine: H67 and E91. Residues D111 and 143–144 (DG) each bind S-methyl-5'-thioadenosine. D164 functions as the Proton acceptor in the catalytic mechanism.

The protein belongs to the spermidine/spermine synthase family. In terms of assembly, homodimer or homotetramer.

The protein resides in the cytoplasm. The enzyme catalyses S-adenosyl 3-(methylsulfanyl)propylamine + putrescine = S-methyl-5'-thioadenosine + spermidine + H(+). It participates in amine and polyamine biosynthesis; spermidine biosynthesis; spermidine from putrescine: step 1/1. Its function is as follows. Catalyzes the irreversible transfer of a propylamine group from the amino donor S-adenosylmethioninamine (decarboxy-AdoMet) to putrescine (1,4-diaminobutane) to yield spermidine. The chain is Polyamine aminopropyltransferase from Pyrobaculum calidifontis (strain DSM 21063 / JCM 11548 / VA1).